Here is a 333-residue protein sequence, read N- to C-terminus: Arylacetonitrilase (333 aa).

The region spanning 9-284 is the CN hydrolase domain; sequence VRVAVTQAEP…EGIIYADLEM (276 aa). The Proton acceptor role is filled by Glu49. The active site involves Lys129. Cys164 acts as the Nucleophile in catalysis.

Belongs to the carbon-nitrogen hydrolase superfamily. Nitrilase family.

The catalysed reaction is a nitrile + 2 H2O = a carboxylate + NH4(+). The enzyme catalyses 4-chlorophenylacetonitrile + 2 H2O = 4-chlorophenylacetate + NH4(+). In terms of biological role, nitrilase that hydrolyzes preferentially phenylacetonitrile, (R,S)-mandelonitrile, and 3-indolylacetonitrile. This is Arylacetonitrilase from Aspergillus oryzae (strain ATCC 42149 / RIB 40) (Yellow koji mold).